Reading from the N-terminus, the 238-residue chain is Orotidine 5'-phosphate decarboxylase (238 aa).

Residues Asp-18, Lys-40, Asp-67–Thr-76, Thr-122, Arg-183, Gln-192, and Arg-213 each bind substrate. The active-site Proton donor is the Lys-69.

The protein belongs to the OMP decarboxylase family. Type 1 subfamily. Homodimer.

The catalysed reaction is orotidine 5'-phosphate + H(+) = UMP + CO2. It functions in the pathway pyrimidine metabolism; UMP biosynthesis via de novo pathway; UMP from orotate: step 2/2. In terms of biological role, catalyzes the decarboxylation of orotidine 5'-monophosphate (OMP) to uridine 5'-monophosphate (UMP). This chain is Orotidine 5'-phosphate decarboxylase, found in Brucella melitensis biotype 2 (strain ATCC 23457).